The sequence spans 205 residues: Coenzyme Q-binding protein COQ10, mitochondrial (205 aa).

It belongs to the COQ10 family. As to quaternary structure, interacts with coenzyme Q.

Its subcellular location is the mitochondrion inner membrane. In terms of biological role, required for the function of coenzyme Q in the respiratory chain. May serve as a chaperone or may be involved in the transport of Q6 from its site of synthesis to the catalytic sites of the respiratory complexes. In Dictyostelium discoideum (Social amoeba), this protein is Coenzyme Q-binding protein COQ10, mitochondrial (coq10-1).